A 329-amino-acid chain; its full sequence is Glutamine synthetase (329 aa).

In terms of domain architecture, GS beta-grasp spans 4–86 (YKLEYIWLDA…VMCEVMMPDA (83 aa)). Residues 89 to 329 (PHASNTRATV…GDPYQMLLSS (241 aa)) enclose the GS catalytic domain. Positions 109 and 111 each coordinate Mg(2+). E167 provides a ligand contact to ATP. The Mg(2+) site is built by E172 and E179. An L-glutamate-binding site is contributed by E278.

This sequence belongs to the glutamine synthetase family. Homooctamer and homotetramer. Mg(2+) serves as cofactor.

Its subcellular location is the cytoplasm. The catalysed reaction is L-glutamate + NH4(+) + ATP = L-glutamine + ADP + phosphate + H(+). In terms of biological role, catalyzes the ATP-dependent biosynthesis of glutamine from glutamate and ammonia. The protein is Glutamine synthetase of Rhizobium meliloti (Ensifer meliloti).